We begin with the raw amino-acid sequence, 415 residues long: Squalene synthase 10 (415 aa).

Transmembrane regions (helical) follow at residues 281 to 301 and 392 to 412; these read AIFR…ALCF and LIVI…SNLP.

Belongs to the phytoene/squalene synthase family. Requires Mg(2+) as cofactor. Mn(2+) serves as cofactor.

It is found in the endoplasmic reticulum membrane. It catalyses the reaction 2 (2E,6E)-farnesyl diphosphate + NADH + H(+) = squalene + 2 diphosphate + NAD(+). The catalysed reaction is 2 (2E,6E)-farnesyl diphosphate + NADPH + H(+) = squalene + 2 diphosphate + NADP(+). It functions in the pathway terpene metabolism; lanosterol biosynthesis; lanosterol from farnesyl diphosphate: step 1/3. In terms of biological role, component of the triterpene saponins (e.g. ginsenosides or panaxosides) and phytosterols biosynthetic pathways. Catalyzes the biosynthesis of squalene. In Panax ginseng (Korean ginseng), this protein is Squalene synthase 10.